The sequence spans 185 residues: Ribosome-recycling factor (185 aa).

It belongs to the RRF family.

It localises to the cytoplasm. Functionally, responsible for the release of ribosomes from messenger RNA at the termination of protein biosynthesis. May increase the efficiency of translation by recycling ribosomes from one round of translation to another. The polypeptide is Ribosome-recycling factor (Xylella fastidiosa (strain 9a5c)).